Consider the following 368-residue polypeptide: Cytochrome-c peroxidase IdrP2 (368 aa).

A signal peptide spans 1-27 (MKWHRGRLTQTLGAMGLTATLTVAAQA). Cytochrome c domains lie at 48–158 (AMIE…ALWQ) and 201–346 (KEAQ…LTLS). Cysteine 70, cysteine 73, histidine 74, cysteine 216, cysteine 219, and histidine 220 together coordinate heme c.

As to quaternary structure, the iodate reductase (Idr) complex is composed of a molybdopterin-dependent iodate reductase (IdrA and IdrB subunits) and two associated peroxidases (IdrP1 and IdrP2). Heme c is required as a cofactor.

The protein localises to the periplasm. It carries out the reaction 2 Fe(II)-[cytochrome c] + H2O2 + 2 H(+) = 2 Fe(III)-[cytochrome c] + 2 H2O. Functionally, involved in iodate respiration. Probably reduces the H(2)O(2) produced by IdrA/IdrB to H(2)O, using a reduced cytochrome c as the electron donor. This chain is Cytochrome-c peroxidase IdrP2, found in Pseudomonas sp. (strain SCT).